The chain runs to 132 residues: Nickel-responsive regulator (132 aa).

Ni(2+) is bound by residues histidine 76, histidine 87, histidine 89, and cysteine 95.

It belongs to the transcriptional regulatory CopG/NikR family. In terms of assembly, homotetramer. Ni(2+) is required as a cofactor.

Transcriptional repressor of the nikABCDE operon. Is active in the presence of excessive concentrations of intracellular nickel. This is Nickel-responsive regulator from Klebsiella pneumoniae (strain 342).